The following is a 442-amino-acid chain: Ribosomal protein uS12 methylthiotransferase RimO (442 aa).

One can recognise an MTTase N-terminal domain in the interval 8–118; sequence PKVGFVSLGC…VLGHVHKYVA (111 aa). Positions 17, 53, 82, 150, 154, and 157 each coordinate [4Fe-4S] cluster. The Radical SAM core domain occupies 136–373; it reads LTPRHYAYLK…MELQQQVSIR (238 aa). The region spanning 376-442 is the TRAM domain; the sequence is ARKVGKEMTV…EYDLWASLIG (67 aa).

It belongs to the methylthiotransferase family. RimO subfamily. Requires [4Fe-4S] cluster as cofactor.

Its subcellular location is the cytoplasm. The enzyme catalyses L-aspartate(89)-[ribosomal protein uS12]-hydrogen + (sulfur carrier)-SH + AH2 + 2 S-adenosyl-L-methionine = 3-methylsulfanyl-L-aspartate(89)-[ribosomal protein uS12]-hydrogen + (sulfur carrier)-H + 5'-deoxyadenosine + L-methionine + A + S-adenosyl-L-homocysteine + 2 H(+). Its function is as follows. Catalyzes the methylthiolation of an aspartic acid residue of ribosomal protein uS12. The sequence is that of Ribosomal protein uS12 methylthiotransferase RimO from Aeromonas salmonicida (strain A449).